A 98-amino-acid chain; its full sequence is Large ribosomal subunit protein uL23 (98 aa).

It belongs to the universal ribosomal protein uL23 family. In terms of assembly, part of the 50S ribosomal subunit. Contacts protein L29, and trigger factor when it is bound to the ribosome.

Functionally, one of the early assembly proteins it binds 23S rRNA. One of the proteins that surrounds the polypeptide exit tunnel on the outside of the ribosome. Forms the main docking site for trigger factor binding to the ribosome. The protein is Large ribosomal subunit protein uL23 of Caulobacter sp. (strain K31).